The following is a 519-amino-acid chain: Glucoamylase GLU1 (519 aa).

A signal peptide spans 1 to 27 (MKFGVLFSVFAAIVSALPLQEGPLNKR). N-linked (GlcNAc...) asparagine glycosylation is found at asparagine 115 and asparagine 127. Tryptophan 166 lines the substrate pocket. The N-linked (GlcNAc...) asparagine glycan is linked to asparagine 205. Catalysis depends on aspartate 234, which acts as the Proton acceptor. Catalysis depends on glutamate 237, which acts as the Proton donor.

Belongs to the glycosyl hydrolase 15 family.

The enzyme catalyses Hydrolysis of terminal (1-&gt;4)-linked alpha-D-glucose residues successively from non-reducing ends of the chains with release of beta-D-glucose.. The protein is Glucoamylase GLU1 (GLU1) of Saccharomycopsis fibuligera (Yeast).